The primary structure comprises 532 residues: FAD-dependent monooxygenase hkm7 (532 aa).

Residues Arg191–Tyr193 and Asp261 each bind FAD.

This sequence belongs to the PheA/TfdB FAD monooxygenase family.

The protein operates within secondary metabolite biosynthesis. Its function is as follows. FAD-dependent monooxygenase; part of the gene cluster that mediates the biosynthesis of hancockiamides, an unusual new family of N-cinnamoylated piperazines. The NRPS hkm10 and the NmrA-like reductase hkm9 are proposed to convert two molecules of L-Phe to the intermediary piperazine called xenocockiamide A. Xenocockiamide A is then converted to hancockiamide D via a series of hydroxylations and O-methylations. The tyrosinase hkm6 may catalyze an aromatic hydroxylation, then the 2-oxoglutarate-dependent Fe(II) dioxygenase hkm4 and the FAD-dependent phenol hydroxylase hkm7 may catalyze consecutive hydroxylations to install 2 more hydroxy groups, and the methyltransferase hkm8 probably catalyzes two methylations using 2 molecules of S-adenosyl-L-methionine (SAM). The NRPS hkm11 activates and transfers trans-cinnamate supplied by the PAL hkm12 to hancockiamide D and produces hancockiamide A. NRPS Hkm11 has the flexibility to tolerate the bulky hancockiamide G as a substrate and the absence of the acetyl-transferase hkm3 opens up the opportunity for hkm11 to introduce a second N-cinnamoyl moiety. The cytochrome P450 monooxygenase hkm5 catalyzes the methylenedioxy bridge formation, converting hancockiamide A into hancockiamide G. Hkm5 can also convert hancockiamide B into hancockiamide C, and hancockiamide D into hancockiamide H. The N-acetyltransferase hkm3 finally transfers an acetyl group to 1-N of piperazine, converting hancockiamide A into hancockiamide B and hancockiamide G into hancockiamide C. The chain is FAD-dependent monooxygenase hkm7 from Aspergillus hancockii.